The sequence spans 204 residues: Holliday junction branch migration complex subunit RuvA (204 aa).

The interval 1–64 (MIGKLKGTLE…EEAIRLFGFA (64 aa)) is domain I. The tract at residues 65 to 143 (TRAEQEWFCM…PFEQAVKTVS (79 aa)) is domain II. Residues 144–154 (VPQREITHQPA) form a flexible linker region. Positions 154–204 (AHDALSALMKLGFEREQAARALALAMNALEGEAVSSALLIRHSLKLLSSPT) are domain III.

It belongs to the RuvA family. As to quaternary structure, homotetramer. Forms an RuvA(8)-RuvB(12)-Holliday junction (HJ) complex. HJ DNA is sandwiched between 2 RuvA tetramers; dsDNA enters through RuvA and exits via RuvB. An RuvB hexamer assembles on each DNA strand where it exits the tetramer. Each RuvB hexamer is contacted by two RuvA subunits (via domain III) on 2 adjacent RuvB subunits; this complex drives branch migration. In the full resolvosome a probable DNA-RuvA(4)-RuvB(12)-RuvC(2) complex forms which resolves the HJ.

The protein resides in the cytoplasm. In terms of biological role, the RuvA-RuvB-RuvC complex processes Holliday junction (HJ) DNA during genetic recombination and DNA repair, while the RuvA-RuvB complex plays an important role in the rescue of blocked DNA replication forks via replication fork reversal (RFR). RuvA specifically binds to HJ cruciform DNA, conferring on it an open structure. The RuvB hexamer acts as an ATP-dependent pump, pulling dsDNA into and through the RuvAB complex. HJ branch migration allows RuvC to scan DNA until it finds its consensus sequence, where it cleaves and resolves the cruciform DNA. In Bartonella tribocorum (strain CIP 105476 / IBS 506), this protein is Holliday junction branch migration complex subunit RuvA.